We begin with the raw amino-acid sequence, 361 residues long: Bis(monoacylglycero)phosphate synthase CLN5 (361 aa).

The segment covering 1-21 (MAQAGGAGAGAWGRRGAGAGA) has biased composition (gly residues). A disordered region spans residues 1 to 24 (MAQAGGAGAGAWGRRGAGAGAGPE). Residues 1–30 (MAQAGGAGAGAWGRRGAGAGAGPERAPWRW) lie on the Cytoplasmic side of the membrane. Residues 31–48 (APALLWLAAATAAAAAAG) form a helical; Signal-anchor for type II membrane protein membrane-spanning segment. Residues 49–361 (DPSRRQWPVP…NRKNRTLSGL (313 aa)) are Lumenal-facing. 2 disulfide bridges follow: Cys72–Cys161 and Cys79–Cys167. His119 serves as the catalytic Proton acceptor. N-linked (GlcNAc...) asparagine glycosylation is found at Asn132, Asn145, Asn180, and Asn205. The Nucleophile; Acyl-thioester intermediate role is filled by Cys233. 3 N-linked (GlcNAc...) asparagine glycosylation sites follow: Asn257, Asn273, and Asn283. Residues 306 to 345 (FLLSLLQIFDAVVIHREFYLFYNFEYWFLPMKSPFIKITY) are membrane-anchoring. N-linked (GlcNAc...) asparagine glycosylation is present at Asn355.

Belongs to the CLN5 family. Multimer. Interacts with SORT1, RAB5A and RAB7A. Interacts with PPT1, TPP1, CLN3, CLN6, CLN8, ATP5F1A and ATP5F1B. Post-translationally, N-glycosylated with both high mannose and complex type sugars. Glycosylation is important for proper folding and trafficking to the lysosomes. In terms of processing, the type II membrane signal anchor is proteolytically cleaved to produce a mature form that is transported to the lysosomes (Bis(monoacylglycero)phosphate synthase CLN5, secreted form). Can undergo proteolytic cleavage at the C-terminus, probably by a cysteine protease and may involve the removal of approximately 10-15 residues from the C-terminal end.

Its subcellular location is the lysosome. It localises to the membrane. The enzyme catalyses S-hexadecanoyl-L-cysteinyl-[protein] + H2O = L-cysteinyl-[protein] + hexadecanoate + H(+). The catalysed reaction is 2 1-acyl-sn-glycero-3-phospho-(1'-sn-glycerol) = 1-acyl-sn-glycero-3-phospho-(3'-acyl-sn-1'-glycerol) + sn-glycero-3-phospho-(1'-sn-glycerol). It carries out the reaction 2 1-(9Z-octadecenoyl)-sn-glycero-3-phospho-(1'-sn-glycerol) = 1-(9Z-octadecenoyl)-sn-glycero-3-phospho-(3'-(9Z-octadecenoyl)-1'-sn-glycerol) + sn-glycero-3-phospho-(1'-sn-glycerol). It catalyses the reaction 2 1-octadecanoyl-sn-glycero-3-phospho-(1'-sn-glycerol) = 1-octadecanoyl-sn-glycero-3-phospho-(3'-octadecanoyl-1'-sn-glycerol) + sn-glycero-3-phospho-(1'-sn-glycerol). The enzyme catalyses 2 1-hexadecanoyl-sn-glycero-3-phospho-(1'-sn-glycerol) = 1-hexadecanoyl-sn-glycero-3-phospho-(3'-hexadecanoyl-1'-sn-glycerol) + sn-glycero-3-phospho-(1'-sn-glycerol). The catalysed reaction is 2 1-tetradecanoyl-sn-glycero-3-phospho-(1'-sn-glycerol) = 1-tetradecanoyl-sn-glycero-3-phospho-(3'-tetradecanoyl-1'-sn-glycerol) + sn-glycero-3-phospho-(1'-sn-glycerol). Its function is as follows. Catalyzes the synthesis of bis(monoacylglycero)phosphate (BMP) via transacylation of 2 molecules of lysophosphatidylglycerol (LPG). BMP also known as lysobisphosphatidic acid plays a key role in the formation of intraluminal vesicles and in maintaining intracellular cholesterol homeostasis. Can use only LPG as the exclusive lysophospholipid acyl donor for base exchange and displays BMP synthase activity towards various LPGs (LPG 14:0, LPG 16:0, LPG 18:0, LPG 18:1) with a higher preference for longer chain lengths. Plays a role in influencing the retrograde trafficking of lysosomal sorting receptors SORT1 and IGF2R from the endosomes to the trans-Golgi network by controlling the recruitment of retromer complex to the endosomal membrane. Regulates the localization and activation of RAB7A which is required to recruit the retromer complex to the endosomal membrane. In terms of biological role, exhibits palmitoyl protein thioesterase (S-depalmitoylation) activity in vitro and most likely plays a role in protein S-depalmitoylation. This chain is Bis(monoacylglycero)phosphate synthase CLN5 (CLN5), found in Ovis aries (Sheep).